The chain runs to 115 residues: Large ribosomal subunit protein uL24 (115 aa).

Belongs to the universal ribosomal protein uL24 family. Part of the 50S ribosomal subunit.

In terms of biological role, one of two assembly initiator proteins, it binds directly to the 5'-end of the 23S rRNA, where it nucleates assembly of the 50S subunit. Its function is as follows. One of the proteins that surrounds the polypeptide exit tunnel on the outside of the subunit. This Phytoplasma mali (strain AT) protein is Large ribosomal subunit protein uL24.